Reading from the N-terminus, the 430-residue chain is UDP-N-acetylglucosamine 1-carboxyvinyltransferase (430 aa).

22–23 (KN) is a phosphoenolpyruvate binding site. Residue Arg-102 participates in UDP-N-acetyl-alpha-D-glucosamine binding. Cys-126 acts as the Proton donor in catalysis. Cys-126 carries the post-translational modification 2-(S-cysteinyl)pyruvic acid O-phosphothioketal. Residues 131-135 (RPVDL), 172-175 (KVSV), Asp-317, and Ile-339 contribute to the UDP-N-acetyl-alpha-D-glucosamine site.

The protein belongs to the EPSP synthase family. MurA subfamily.

Its subcellular location is the cytoplasm. It catalyses the reaction phosphoenolpyruvate + UDP-N-acetyl-alpha-D-glucosamine = UDP-N-acetyl-3-O-(1-carboxyvinyl)-alpha-D-glucosamine + phosphate. It participates in cell wall biogenesis; peptidoglycan biosynthesis. Functionally, cell wall formation. Adds enolpyruvyl to UDP-N-acetylglucosamine. The chain is UDP-N-acetylglucosamine 1-carboxyvinyltransferase from Sinorhizobium fredii (strain NBRC 101917 / NGR234).